Reading from the N-terminus, the 532-residue chain is Membrane protein insertase YidC (532 aa).

The next 5 membrane-spanning stretches (helical) occupy residues 7–27 (FFIFAFLFVSFLLWQAWQSQM), 336–356 (LTILYSIIGNWGFSIILITFI), 413–433 (GGFLPIFIQMPIFLSLYYMLI), 450–470 (LSSQDPYYVLPVIMGLTMFFI), and 492–512 (PVIFTAFFLWFPSGLVLYYII).

The protein belongs to the OXA1/ALB3/YidC family. Type 1 subfamily. In terms of assembly, interacts with the Sec translocase complex via SecD. Specifically interacts with transmembrane segments of nascent integral membrane proteins during membrane integration.

It localises to the cell membrane. In terms of biological role, required for the insertion and/or proper folding and/or complex formation of integral membrane proteins into the membrane. Involved in integration of membrane proteins that insert both dependently and independently of the Sec translocase complex, as well as at least some lipoproteins. Aids folding of multispanning membrane proteins. In Buchnera aphidicola subsp. Acyrthosiphon pisum (strain APS) (Acyrthosiphon pisum symbiotic bacterium), this protein is Membrane protein insertase YidC.